Consider the following 304-residue polypeptide: tRNA pseudouridine synthase A (304 aa).

Asp65 (nucleophile) is an active-site residue. Substrate is bound at residue Tyr123. Positions 274 to 304 are disordered; it reads HTGQEKPEARLGNGDLESREERPPHEMSPLH. The segment covering 289 to 298 has biased composition (basic and acidic residues); sequence LESREERPPH.

The protein belongs to the tRNA pseudouridine synthase TruA family. Homodimer.

The enzyme catalyses uridine(38/39/40) in tRNA = pseudouridine(38/39/40) in tRNA. Its function is as follows. Formation of pseudouridine at positions 38, 39 and 40 in the anticodon stem and loop of transfer RNAs. This chain is tRNA pseudouridine synthase A, found in Gloeobacter violaceus (strain ATCC 29082 / PCC 7421).